The primary structure comprises 58 residues: UPF0391 membrane protein Sbal_1421 (58 aa).

The next 2 helical transmembrane spans lie at 6–26 (LVFL…IAGA) and 28–48 (AGIA…SLLV).

Belongs to the UPF0391 family.

It localises to the cell membrane. This chain is UPF0391 membrane protein Sbal_1421, found in Shewanella baltica (strain OS155 / ATCC BAA-1091).